Here is a 342-residue protein sequence, read N- to C-terminus: tRNA N6-adenosine threonylcarbamoyltransferase (342 aa).

Residues H112 and H116 each contribute to the Fe cation site. Residues 134–138, D167, G180, and N280 each bind substrate; that span reads LASGG. D308 lines the Fe cation pocket.

It belongs to the KAE1 / TsaD family. It depends on Fe(2+) as a cofactor.

It is found in the cytoplasm. It carries out the reaction L-threonylcarbamoyladenylate + adenosine(37) in tRNA = N(6)-L-threonylcarbamoyladenosine(37) in tRNA + AMP + H(+). Its function is as follows. Required for the formation of a threonylcarbamoyl group on adenosine at position 37 (t(6)A37) in tRNAs that read codons beginning with adenine. Is involved in the transfer of the threonylcarbamoyl moiety of threonylcarbamoyl-AMP (TC-AMP) to the N6 group of A37, together with TsaE and TsaB. TsaD likely plays a direct catalytic role in this reaction. The sequence is that of tRNA N6-adenosine threonylcarbamoyltransferase from Rickettsia canadensis (strain McKiel).